Here is a 519-residue protein sequence, read N- to C-terminus: Ent-kaurene oxidase (519 aa).

At 1–10 the chain is on the chloroplast intermembrane side; the sequence is MDTLLSLQAV. The chain crosses the membrane as a helical span at residues 11 to 31; that stretch reads PAAAAIGGPVVAIGGITLFFI. Topologically, residues 32–519 are cytoplasmic; it reads REYVKDQRKK…PRLRDRVCVS (488 aa). Position 458 (C458) interacts with heme.

It belongs to the cytochrome P450 family. The cofactor is heme.

Its subcellular location is the plastid. It localises to the chloroplast outer membrane. The enzyme catalyses ent-kaur-16-ene + 3 reduced [NADPH--hemoprotein reductase] + 3 O2 = ent-kaur-16-en-19-oate + 3 oxidized [NADPH--hemoprotein reductase] + 4 H2O + 4 H(+). Its pathway is plant hormone biosynthesis; gibberellin biosynthesis. Functionally, catalyzes three successive oxidations of the 4-methyl group of ent-kaurene giving kaurenoic acid, a key step in gibberellins (GAs) biosynthesis. GAs, which are involved many processes, including stem elongation, play a central role in plant development. The protein is Ent-kaurene oxidase of Salvia miltiorrhiza (Chinese sage).